The sequence spans 101 residues: Co-chaperonin GroES (101 aa).

It belongs to the GroES chaperonin family. Heptamer of 7 subunits arranged in a ring. Interacts with the chaperonin GroEL.

It localises to the cytoplasm. Its function is as follows. Together with the chaperonin GroEL, plays an essential role in assisting protein folding. The GroEL-GroES system forms a nano-cage that allows encapsulation of the non-native substrate proteins and provides a physical environment optimized to promote and accelerate protein folding. GroES binds to the apical surface of the GroEL ring, thereby capping the opening of the GroEL channel. The sequence is that of Co-chaperonin GroES from Thermus thermophilus (strain ATCC BAA-163 / DSM 7039 / HB27).